We begin with the raw amino-acid sequence, 206 residues long: Dephospho-CoA kinase (206 aa).

The DPCK domain occupies 4-200 (IVALTGGIGS…AHYLQLASQF (197 aa)). Residue 12-17 (GSGKST) participates in ATP binding.

The protein belongs to the CoaE family.

Its subcellular location is the cytoplasm. The enzyme catalyses 3'-dephospho-CoA + ATP = ADP + CoA + H(+). Its pathway is cofactor biosynthesis; coenzyme A biosynthesis; CoA from (R)-pantothenate: step 5/5. Its function is as follows. Catalyzes the phosphorylation of the 3'-hydroxyl group of dephosphocoenzyme A to form coenzyme A. This chain is Dephospho-CoA kinase, found in Shigella boydii serotype 4 (strain Sb227).